The sequence spans 505 residues: MSDQQLDQPSLSHEERQHEENKLIAQRKEKLAAVREQGIAFPNDFRRDSLCGELQKQYEGKSKEELEAAAIPVKIAGRIMLNRGAFMVLQDTSGRLQVYVDRKGLPAETLEAIKTWDLGDIIAAEGTLARSGKGDLYVNMTSVRLLTKSLRPLPDKHHGLTDTEQRYRQRYVDLIVNEETRHTFRVRSQVIAHIRRFLNERGFLEVETPMLQTIPGGAAAKPFETHHNALDMQMFLRIAPELYLKRLVVGGFEKVFEINRNFRNEGVSTRHNPEFTMLEFYQAYADYRDNMDLTEELFRELALAVLGTTDVPYGDKVFHFGEPFVRLSVYDSILKYNPDITEADLNDVDKARAIAKKAGAKVLGHEGLGKLQVMIFEELVESKLEQPHFITEYPFEVSPLARRNDQNPAVTDRFELFIGGREIANAYSELNDAEDQAERFHAQVAEKDAGDDEAMHFDADFVRALEYGMPPTAGEGIGIDRLVMLLTNSPSIRDVILFPHMRPQA.

Residues 1-11 show a composition bias toward polar residues; sequence MSDQQLDQPSL. Residues 1-23 form a disordered region; sequence MSDQQLDQPSLSHEERQHEENKL. Basic and acidic residues predominate over residues 12–23; that stretch reads SHEERQHEENKL. Residues Glu-415 and Glu-422 each contribute to the Mg(2+) site.

The protein belongs to the class-II aminoacyl-tRNA synthetase family. Homodimer. Requires Mg(2+) as cofactor.

Its subcellular location is the cytoplasm. The catalysed reaction is tRNA(Lys) + L-lysine + ATP = L-lysyl-tRNA(Lys) + AMP + diphosphate. The protein is Lysine--tRNA ligase of Ectopseudomonas mendocina (strain ymp) (Pseudomonas mendocina).